Here is a 293-residue protein sequence, read N- to C-terminus: Protease HtpX homolog (293 aa).

Transmembrane regions (helical) follow at residues 6–26 (VAVM…LIGG) and 28–48 (SGMV…YWNS). H130 serves as a coordination point for Zn(2+). E131 is a catalytic residue. H134 is a binding site for Zn(2+). A run of 2 helical transmembrane segments spans residues 145–165 (LTAT…FFGG) and 172–192 (PLGA…AMMV). A Zn(2+)-binding site is contributed by E201.

The protein belongs to the peptidase M48B family. The cofactor is Zn(2+).

The protein localises to the cell inner membrane. The polypeptide is Protease HtpX homolog (Rhodospirillum rubrum (strain ATCC 11170 / ATH 1.1.1 / DSM 467 / LMG 4362 / NCIMB 8255 / S1)).